The primary structure comprises 503 residues: MEEFQGYLELDRSQQHDFLYPLIFREYIYALAHDHGLNRSILLDNVGYDNKSSLLIIKRLISRMYQQNHLIISANDSNPPQNWGYNKNLYCQMISEGFAVIVEIPFSLRLVSSLEGTETVKSYNLRSIHSIFPFLEDKFPHLNYGSDVLIPYPIHLEILVQTLRYWAKDPSSLHLLRLFLHDYYNLNSLITPNKSIFSKSNPRLFLLLYNSYVCEYESILLFLRNQSSHLQFTSSWIFFERIHFYEKIKYPVEEVFANDFPAILWFFKDPFMHYVRYQGKSILASKDTPLLMNKWKYYLVNLWQCHFYVWSQPGRIDINQLSKHSLDFLGYLSSIRPNLSVVRSQMLENSFIMDNAMKKFDTLVPIIPLIGSLAKVKFCNALGHPISKSTWADSSDFDIIDRFVRICRNLSHYYSGSSKKKSLYQIKYILRLSCVKTLARKHKSTVRTFLKRLGSKLLEEFFTEEEQILSLIFPRASSTLKRFYRERIWYLDIFCINDLVNHE.

It belongs to the intron maturase 2 family. MatK subfamily.

It is found in the plastid. The protein localises to the chloroplast. Functionally, usually encoded in the trnK tRNA gene intron. Probably assists in splicing its own and other chloroplast group II introns. The chain is Maturase K from Purshia tridentata (Antelope bitterbrush).